The primary structure comprises 284 residues: Tropomyosin (284 aa).

A coiled-coil region spans residues Met-1–Tyr-284. The segment at Thr-111–Glu-131 is disordered.

This sequence belongs to the tropomyosin family. Homodimer.

Tropomyosin, in association with the troponin complex, plays a central role in the calcium dependent regulation of muscle contraction. This Schistosoma japonicum (Blood fluke) protein is Tropomyosin.